A 611-amino-acid chain; its full sequence is MFS siderochrome iron transporter C (611 aa).

Residues 1-25 form a disordered region; sequence MPFLDHRTGPSYGTIDQMEQHSDDE. Asn-62 carries an N-linked (GlcNAc...) asparagine glycan. 14 helical membrane passes run 71 to 91, 107 to 127, 136 to 156, 165 to 185, 194 to 214, 228 to 248, 282 to 302, 313 to 333, 353 to 373, 393 to 413, 418 to 438, 449 to 469, 486 to 506, and 560 to 580; these read VIAY…GQTV, LIST…PPMA, FEAF…MAAS, AQIF…VFIA, AFLA…GPTI, YGMW…SLLL, MGGL…LTLA, SIVA…FWES, ALAG…SVQP, VTQT…ILIK, YRAF…LMMV, ILVT…PVQL, MFLT…GAVW, and LLIL…AMED. A disordered region spans residues 592–611; the sequence is VDPVPAEEGEIEPNRHVKRT.

This sequence belongs to the major facilitator superfamily.

The protein resides in the membrane. Functionally, major facilitator transporter that contributes to the maintenance of intracellular siderophore ferricrocin (FC) levels. Plays a role in conidiation and confers protection against oxidative stress. Also contributes to fungal virulence in the Galleria mellonella animal model system. Does not appear to play a role in either siderophore export or uptake. This Aspergillus fumigatus (strain ATCC MYA-4609 / CBS 101355 / FGSC A1100 / Af293) (Neosartorya fumigata) protein is MFS siderochrome iron transporter C.